Reading from the N-terminus, the 60-residue chain is Ixodegrin YY-39 (60 aa).

The first 21 residues, 1–21 (MNAALIAALLILGALTLDATA), serve as a signal peptide directing secretion. Residues 49–51 (RGD) carry the Cell attachment site motif.

Belongs to the ixodegrin family. In terms of processing, contains 3 disulfide bonds. As to expression, expressed in salivary glands.

The protein resides in the secreted. Its function is as follows. Tick salivary platelet aggregation inhibitor that plays an important part in the anti-hemostatic strategy of ticks. Inhibits platelet aggregation induced by ADP, thrombin and thromboxane A2 (TXA2). Blocks platelet adhesion to soluble collagen (most probably through the binding to alpha-2/beta-1 integrin (ITGA2/ITGB1)) and binds to purified glycoprotein IIb/IIIa (ITGA2B/ITGB3) in a dose-dependent manner. In vivo, reduces thrombus weight effectively in a rat arteriovenous shunt model and inhibits thrombosis in a carrageenan-induced mouse tail thrombosis model. This is Ixodegrin YY-39 from Ixodes scapularis (Black-legged tick).